We begin with the raw amino-acid sequence, 310 residues long: Isoflavone reductase homolog P3 (310 aa).

NADP(+) contacts are provided by residues 12 to 18 (GGTGYIG), Arg37, and Lys46. Lys134 serves as the catalytic Proton acceptor. Arg138 provides a ligand contact to NADP(+).

It belongs to the NmrA-type oxidoreductase family. Isoflavone reductase subfamily.

Its subcellular location is the cytoplasm. In Arabidopsis thaliana (Mouse-ear cress), this protein is Isoflavone reductase homolog P3.